Here is a 178-residue protein sequence, read N- to C-terminus: High mobility group B protein 1 (178 aa).

Composition is skewed to basic and acidic residues over residues 1-52 (MKTA…DPNK) and 101-118 (APYEEKAAKRKAEYEKQM). Disordered stretches follow at residues 1 to 59 (MKTA…APSA) and 75 to 178 (NPNV…EEED). Positions 53–122 (PKRAPSAFFV…EYEKQMDAYN (70 aa)) form a DNA-binding region, HMG box. A phosphoserine mark is found at serine 137 and serine 146. The span at 140–178 (NDEDEASGEEELLEKEAAGDDEEEEEEEDDDDDDDEEED) shows a compositional bias: acidic residues.

This sequence belongs to the HMGB family. In terms of tissue distribution, expressed in cotyledons, roots, stems, leaves and flowers (excluding pedicels).

It localises to the nucleus. In terms of biological role, binds preferentially double-stranded DNA. Modulates general plant growth and stress tolerance. Confers sensitivity to salt and genotoxic (methyl methanesulfonate, MMS) stresses. The polypeptide is High mobility group B protein 1 (HMGB1) (Arabidopsis thaliana (Mouse-ear cress)).